The primary structure comprises 238 residues: tRNA1(Val) (adenine(37)-N6)-methyltransferase (238 aa).

Belongs to the methyltransferase superfamily. tRNA (adenine-N(6)-)-methyltransferase family.

Its subcellular location is the cytoplasm. The catalysed reaction is adenosine(37) in tRNA1(Val) + S-adenosyl-L-methionine = N(6)-methyladenosine(37) in tRNA1(Val) + S-adenosyl-L-homocysteine + H(+). In terms of biological role, specifically methylates the adenine in position 37 of tRNA(1)(Val) (anticodon cmo5UAC). This is tRNA1(Val) (adenine(37)-N6)-methyltransferase from Shewanella sp. (strain W3-18-1).